The following is a 273-amino-acid chain: Formamidopyrimidine-DNA glycosylase (273 aa).

Pro-2 (schiff-base intermediate with DNA) is an active-site residue. Glu-3 serves as the catalytic Proton donor. Lys-60 acts as the Proton donor; for beta-elimination activity in catalysis. 3 residues coordinate DNA: His-94, Arg-113, and Lys-154. An FPG-type zinc finger spans residues Glu-239 to Ala-273. The Proton donor; for delta-elimination activity role is filled by Arg-263.

It belongs to the FPG family. In terms of assembly, monomer. Requires Zn(2+) as cofactor.

The enzyme catalyses Hydrolysis of DNA containing ring-opened 7-methylguanine residues, releasing 2,6-diamino-4-hydroxy-5-(N-methyl)formamidopyrimidine.. It catalyses the reaction 2'-deoxyribonucleotide-(2'-deoxyribose 5'-phosphate)-2'-deoxyribonucleotide-DNA = a 3'-end 2'-deoxyribonucleotide-(2,3-dehydro-2,3-deoxyribose 5'-phosphate)-DNA + a 5'-end 5'-phospho-2'-deoxyribonucleoside-DNA + H(+). Its function is as follows. Involved in base excision repair of DNA damaged by oxidation or by mutagenic agents. Acts as a DNA glycosylase that recognizes and removes damaged bases. Has a preference for oxidized purines, such as 7,8-dihydro-8-oxoguanine (8-oxoG). Has AP (apurinic/apyrimidinic) lyase activity and introduces nicks in the DNA strand. Cleaves the DNA backbone by beta-delta elimination to generate a single-strand break at the site of the removed base with both 3'- and 5'-phosphates. The chain is Formamidopyrimidine-DNA glycosylase from Herpetosiphon aurantiacus (strain ATCC 23779 / DSM 785 / 114-95).